The primary structure comprises 346 residues: MSDRNPLIDADRRVDEDNTLRPQTLDDFVGQAAARANLKVFIEAAKVRGEALDHVLFVGPPGLGKTTLAQIMAKELGVNFRSTSGPVIAKAGDLAALLTNLEERDVLFIDEIHRLSPAVEEILYPAMEDFQLDLIIGEGPAARSVKIDLAKFTLVAATTRLGLLTTPLRDRFGIPTRLNFYTVEELEYIVRRGARIMQMGISPDGALEVARRSRGTPRIAGRLLRRVRDFALVAGADVIDRKIADEALSRLEVDNRGLDQLDRRYLNIIARNFGGGPVGIETIAAGLSEPRDAIEDIIEPYLIQQGFLQRTPRGRVLTAVAWQHLGLPAPAEIIQQSQYGLFMEDE.

Positions 1-181 (MSDRNPLIDA…FGIPTRLNFY (181 aa)) are large ATPase domain (RuvB-L). ATP contacts are provided by residues Leu20, Arg21, Gly62, Lys65, Thr66, Thr67, 128 to 130 (EDF), Arg171, Tyr181, and Arg218. Residue Thr66 coordinates Mg(2+). Residues 182–252 (TVEELEYIVR…IADEALSRLE (71 aa)) are small ATPAse domain (RuvB-S). The segment at 255 to 346 (NRGLDQLDRR…SQYGLFMEDE (92 aa)) is head domain (RuvB-H). DNA contacts are provided by Arg291, Arg310, and Arg315.

It belongs to the RuvB family. In terms of assembly, homohexamer. Forms an RuvA(8)-RuvB(12)-Holliday junction (HJ) complex. HJ DNA is sandwiched between 2 RuvA tetramers; dsDNA enters through RuvA and exits via RuvB. An RuvB hexamer assembles on each DNA strand where it exits the tetramer. Each RuvB hexamer is contacted by two RuvA subunits (via domain III) on 2 adjacent RuvB subunits; this complex drives branch migration. In the full resolvosome a probable DNA-RuvA(4)-RuvB(12)-RuvC(2) complex forms which resolves the HJ.

The protein localises to the cytoplasm. The enzyme catalyses ATP + H2O = ADP + phosphate + H(+). The RuvA-RuvB-RuvC complex processes Holliday junction (HJ) DNA during genetic recombination and DNA repair, while the RuvA-RuvB complex plays an important role in the rescue of blocked DNA replication forks via replication fork reversal (RFR). RuvA specifically binds to HJ cruciform DNA, conferring on it an open structure. The RuvB hexamer acts as an ATP-dependent pump, pulling dsDNA into and through the RuvAB complex. RuvB forms 2 homohexamers on either side of HJ DNA bound by 1 or 2 RuvA tetramers; 4 subunits per hexamer contact DNA at a time. Coordinated motions by a converter formed by DNA-disengaged RuvB subunits stimulates ATP hydrolysis and nucleotide exchange. Immobilization of the converter enables RuvB to convert the ATP-contained energy into a lever motion, pulling 2 nucleotides of DNA out of the RuvA tetramer per ATP hydrolyzed, thus driving DNA branch migration. The RuvB motors rotate together with the DNA substrate, which together with the progressing nucleotide cycle form the mechanistic basis for DNA recombination by continuous HJ branch migration. Branch migration allows RuvC to scan DNA until it finds its consensus sequence, where it cleaves and resolves cruciform DNA. This is Holliday junction branch migration complex subunit RuvB from Brucella anthropi (strain ATCC 49188 / DSM 6882 / CCUG 24695 / JCM 21032 / LMG 3331 / NBRC 15819 / NCTC 12168 / Alc 37) (Ochrobactrum anthropi).